The primary structure comprises 581 residues: Frizzled-10 (581 aa).

An N-terminal signal peptide occupies residues 1 to 20 (MQRPGPRLWLVLQVMGSCAA). The Extracellular portion of the chain corresponds to 21–225 (ISSMDMERPG…DVYWSREDKR (205 aa)). Positions 29-150 (PGDGKCQPIE…NDPNYLCMEA (122 aa)) constitute an FZ domain. Intrachain disulfides connect cysteine 34–cysteine 95, cysteine 42–cysteine 88, cysteine 79–cysteine 117, cysteine 106–cysteine 147, and cysteine 110–cysteine 134. Residue asparagine 48 is glycosylated (N-linked (GlcNAc...) asparagine). Asparagine 153 carries an N-linked (GlcNAc...) asparagine glycan. Residues 226-246 (FAVVWLAIWAVLCFFSSAFTV) form a helical membrane-spanning segment. Topologically, residues 247–262 (LTFLIDPARFRYPERP) are cytoplasmic. A helical transmembrane segment spans residues 263-283 (IIFLSMCYCVYSVGYLIRLFA). The Extracellular segment spans residues 284–311 (GAESIACDRDSGQLYVIQEGLESTGCTL). A helical transmembrane segment spans residues 312–332 (VFLVLYYFGMASSLWWVVLTL). Residues 333–351 (TWFLAAGKKWGHEAIEANS) are Cytoplasmic-facing. Residues 352–372 (SYFHLAAWAIPAVKTILILVM) form a helical membrane-spanning segment. Topologically, residues 373–393 (RRVAGDELTGVCYVGSMDVNA) are extracellular. A helical transmembrane segment spans residues 394–414 (LTGFVLIPLACYLVIGTSFIL). Residues 415 to 443 (SGFVALFHIRRVMKTGGENTDKLEKLMVR) lie on the Cytoplasmic side of the membrane. Residues 444–464 (IGLFSVLYTVPATCVIACYFY) form a helical membrane-spanning segment. Over 465-502 (ERLNMDYWKILAAQHKCKMNNQTKTLDCLMAASIPAVE) the chain is Extracellular. The N-linked (GlcNAc...) asparagine glycan is linked to asparagine 485. The chain crosses the membrane as a helical span at residues 503–523 (IFMVKIFMLLVVGITSGMWIW). Topologically, residues 524 to 581 (TSKTLQSWQQVCSRRLKKKSRRKPASVITSGGIYKKAQHPQKTHHGKYEIPAQSPTCV) are cytoplasmic. The Lys-Thr-X-X-X-Trp motif, mediates interaction with the PDZ domain of Dvl family members motif lies at 526-531 (KTLQSW). A disordered region spans residues 560–581 (AQHPQKTHHGKYEIPAQSPTCV). A PDZ-binding motif is present at residues 579-581 (TCV).

Belongs to the G-protein coupled receptor Fz/Smo family. As to quaternary structure, interacts with WNT7B. Interacts with MYOC. In terms of processing, ubiquitinated by ZNRF3, leading to its degradation by the proteasome. Highest levels in the placenta and fetal kidney, followed by fetal lung and brain. In adult brain, abundantly expressed in the cerebellum, followed by cerebral cortex, medulla and spinal cord; very low levels in total brain, frontal lobe, temporal lobe and putamen. Weak expression detected in adult brain, heart, lung, skeletal muscle, pancreas, spleen and prostate.

The protein resides in the cell membrane. Functionally, receptor for Wnt proteins. Functions in the canonical Wnt/beta-catenin signaling pathway. The canonical Wnt/beta-catenin signaling pathway leads to the activation of disheveled proteins, inhibition of GSK-3 kinase, nuclear accumulation of beta-catenin and activation of Wnt target genes. A second signaling pathway involving PKC and calcium fluxes has been seen for some family members, but it is not yet clear if it represents a distinct pathway or if it can be integrated in the canonical pathway, as PKC seems to be required for Wnt-mediated inactivation of GSK-3 kinase. Both pathways seem to involve interactions with G-proteins. May be involved in transduction and intercellular transmission of polarity information during tissue morphogenesis and/or in differentiated tissues. This is Frizzled-10 (FZD10) from Homo sapiens (Human).